The primary structure comprises 139 residues: uncharacterized protein (139 aa).

Residues 1-133 (MLSEETIRVI…LAKTLITLEK (133 aa)) enclose the Globin domain.

Belongs to the globin family.

This is an uncharacterized protein from Aquifex aeolicus (strain VF5).